Consider the following 60-residue polypeptide: Large ribosomal subunit protein uL30 (60 aa).

It belongs to the universal ribosomal protein uL30 family. Part of the 50S ribosomal subunit.

The protein is Large ribosomal subunit protein uL30 of Cutibacterium acnes (strain DSM 16379 / KPA171202) (Propionibacterium acnes).